Here is a 457-residue protein sequence, read N- to C-terminus: Bifunctional protein GlmU (457 aa).

A pyrophosphorylase region spans residues 1 to 230 (MSKRYAVVLA…FEESLGVNDR (230 aa)). Residues 9–12 (LAAG), K23, Q73, and 78–79 (GT) each bind UDP-N-acetyl-alpha-D-glucosamine. D103 provides a ligand contact to Mg(2+). The UDP-N-acetyl-alpha-D-glucosamine site is built by G140, E155, N170, and N228. N228 is a Mg(2+) binding site. The interval 231-251 (IALAEASKLMQRRINENHMRN) is linker. An N-acetyltransferase region spans residues 252-457 (GVTLVNPEST…GYAKHLNHGK (206 aa)). R333 and K351 together coordinate UDP-N-acetyl-alpha-D-glucosamine. The active-site Proton acceptor is the H363. 2 residues coordinate UDP-N-acetyl-alpha-D-glucosamine: Y366 and N377. Acetyl-CoA contacts are provided by residues 386 to 387 (NY), A423, and R440.

This sequence in the N-terminal section; belongs to the N-acetylglucosamine-1-phosphate uridyltransferase family. In the C-terminal section; belongs to the transferase hexapeptide repeat family. Homotrimer. Requires Mg(2+) as cofactor.

The protein resides in the cytoplasm. It catalyses the reaction alpha-D-glucosamine 1-phosphate + acetyl-CoA = N-acetyl-alpha-D-glucosamine 1-phosphate + CoA + H(+). The enzyme catalyses N-acetyl-alpha-D-glucosamine 1-phosphate + UTP + H(+) = UDP-N-acetyl-alpha-D-glucosamine + diphosphate. Its pathway is nucleotide-sugar biosynthesis; UDP-N-acetyl-alpha-D-glucosamine biosynthesis; N-acetyl-alpha-D-glucosamine 1-phosphate from alpha-D-glucosamine 6-phosphate (route II): step 2/2. It participates in nucleotide-sugar biosynthesis; UDP-N-acetyl-alpha-D-glucosamine biosynthesis; UDP-N-acetyl-alpha-D-glucosamine from N-acetyl-alpha-D-glucosamine 1-phosphate: step 1/1. It functions in the pathway bacterial outer membrane biogenesis; LPS lipid A biosynthesis. Its function is as follows. Catalyzes the last two sequential reactions in the de novo biosynthetic pathway for UDP-N-acetylglucosamine (UDP-GlcNAc). The C-terminal domain catalyzes the transfer of acetyl group from acetyl coenzyme A to glucosamine-1-phosphate (GlcN-1-P) to produce N-acetylglucosamine-1-phosphate (GlcNAc-1-P), which is converted into UDP-GlcNAc by the transfer of uridine 5-monophosphate (from uridine 5-triphosphate), a reaction catalyzed by the N-terminal domain. The sequence is that of Bifunctional protein GlmU from Listeria monocytogenes serotype 4a (strain HCC23).